The sequence spans 336 residues: Prenytransferase ascA (336 aa).

The disordered stretch occupies residues 1–26 (MAAKSRSPKRGTSEKTPLVEKEAPYQ). A compositionally biased stretch (basic and acidic residues) spans 11-23 (GTSEKTPLVEKEA). The next 8 membrane-spanning stretches (helical) occupy residues 52-72 (PHGN…ASAI), 74-94 (PTEL…TFLM), 131-151 (GHVF…SLPI), 179-199 (VILG…VGLP), 206-226 (FVPT…YDVV), 251-271 (LEGL…TLGY), 272-292 (LVGM…FGLV), and 314-334 (FAIL…DYVV).

This sequence belongs to the UbiA prenyltransferase family. The cofactor is Mg(2+).

It is found in the membrane. The enzyme catalyses orsellinate + (2E,6E)-farnesyl diphosphate = ilicicolinate B + diphosphate. Its pathway is secondary metabolite biosynthesis; terpenoid biosynthesis. Its function is as follows. Prenytransferase; part of the asc-1 gene cluster that mediates the biosynthesis of both ascochlorin and ascofuranone, a strong inhibitor of cyanide-insensitive alternative oxidases and a promising drug candidate against African trypanosomiasis. The first step in the pathway is performed by the non-reducing polyketide synthase ascC that produces orsellinic acid by condensing acetyl-CoA with 3 malonyl-CoA units. Orsellinic acid is then prenylated by the prenyltransferase ascA to yield ilicicolinic acid B. Ilicicolinic acid B is further reduced to ilicicolin B by the reductase ascB. The halogenase ascD then chlorinates ilicicolin B to produce ilicicolin A which is converted to ilicicolin A epoxide by the cytochrome P450 monooxygenase ascE that catalyzes stereoselective epoxidation of the terminal double bond of the prenyl group. Ilicicolin A epoxide is the last common precursor for the biosynthesis of ascofuranone and ascochlorin. The terpene cyclase ascF produces a monocyclic terpene, and the cyclization reaction is proposed to be initiated by protonation of the terminal epoxide of ilicicolin A epoxide to generate a monocyclic tertiarycation, which is followed by a series of hydride and methyl shifts with abstraction of proton, leading to the formation of the (14S,15R,19R)-trimethylcyclohexanone ring structure of ilicicolin C, which is finally reduced to ascochlorin by the dehydrogenase ascG. On the other hand, ilicicolin A epoxide is hydroxylated by the cytochrome P450 monooxygenase ascH, and the resultant product is cyclized by the terpene cyclase ascI to ascofuranol via protonation-initiated epoxide ring opening, which facilitates the 6-endo-tet cyclization to form the tetrahy-drofuran ring. Finally, ascofuranol is oxidized into ascofuranone by ascJ. In Acremonium egyptiacum (Oospora egyptiaca), this protein is Prenytransferase ascA.